The primary structure comprises 404 residues: Sorting nexin-5 (404 aa).

The residue at position 2 (A2) is an N-acetylalanine. The 148-residue stretch at 25–172 (LNVDPSLQID…HVFLEYDQDL (148 aa)) folds into the PX domain. A 1,2-diacyl-sn-glycero-3-phospho-(1D-myo-inositol-4,5-bisphosphate) contacts are provided by residues 40-46 (SERDKVK), 99-105 (FDGPREK), and 113-116 (EGSM). The interaction with DOCK1 stretch occupies residues 169–261 (DQDLSVRRKN…HSLALEEPTV (93 aa)). The segment at 183 to 200 (FGGFFKSVVKSADEVLFS) is membrane-binding amphipathic helix. Position 193 is a phosphoserine (S193). Positions 202-404 (VKEVDDFFEQ…QSCIDLFKNN (203 aa)) constitute a BAR domain. K275 carries the post-translational modification N6-acetyllysine.

It belongs to the sorting nexin family. Forms heterodimers with BAR domain-containing sorting nexins SNX1 and SNX2; does not homodimerize. The heterodimers are proposed to self-assemble into helical arrays on the membrane to stabilize and expand local membrane curvature underlying endosomal tubule formation. Thought to be a component of the originally described retromer complex (also called SNX-BAR retromer) which is a pentamer containing the heterotrimeric retromer cargo-selective complex (CSC), also described as vacuolar protein sorting subcomplex (VPS), and a heterodimeric membrane-deforming subcomplex formed between SNX1 or SNX2 and SNX5 or SNX6 (also called SNX-BAR subcomplex); the respective CSC and SNX-BAR subcomplexes associate with low affinity. Interacts with SNX1, SNX2, VPS26A, VPS29, VPS35, DCTN1, DOCK1, MIB1, PIP5K1C. Interacts with HGS; increased by PIP5K1C kinase activity and by PtdIns(3P) and/or PtdIns(3,4)P2.

It is found in the endosome. It localises to the early endosome. The protein resides in the early endosome membrane. Its subcellular location is the cell membrane. The protein localises to the cytoplasmic vesicle membrane. It is found in the cytoplasm. It localises to the cell projection. The protein resides in the phagocytic cup. Its subcellular location is the ruffle. Its function is as follows. Involved in several stages of intracellular trafficking. Interacts with membranes containing phosphatidylinositol lipids. Acts in part as component of the retromer membrane-deforming SNX-BAR subcomplex. The SNX-BAR retromer mediates retrograde transport of cargo proteins from endosomes to the trans-Golgi network (TGN) and is involved in endosome-to-plasma membrane transport for cargo protein recycling. The SNX-BAR subcomplex functions to deform the donor membrane into a tubular profile called endosome-to-TGN transport carrier (ETC). Does not have in vitro vesicle-to-membrane remodeling activity. Involved in retrograde transport of lysosomal enzyme receptor IGF2R. May function as link between endosomal transport vesicles and dynactin. Plays a role in the internalization of EGFR after EGF stimulation. Involved in EGFR endosomal sorting and degradation; the function involves PIP5K1C and is retromer-independent. Together with PIP5K1C facilitates HGS interaction with ubiquitinated EGFR, which initiates EGFR sorting to intraluminal vesicles (ILVs) of the multivesicular body for subsequent lysosomal degradation. Involved in E-cadherin sorting and degradation; inhibits PIP5K1C-mediated E-cadherin degradation. Plays a role in macropinocytosis. In Rattus norvegicus (Rat), this protein is Sorting nexin-5 (Snx5).